The following is a 927-amino-acid chain: Protein unc-45 homolog B (927 aa).

TPR repeat units lie at residues 4–37 (PVQLKEEGNKYFQSNDYGNAIECYSKALKLITDK), 41–74 (AVLYRNRSACYLKQENYIQAAADASKAIDVDASD), and 76–108 (KALFRRCQALEKLGKLDQAYKDVQRCATLEPKN). ARM repeat units follow at residues 167–206 (DAGAERIFQNNGVNLLMQLIETKDPELILSAVRTLSGMCT), 209–248 (RARATAIVHLVGINKICSIMAVDHEEIALAACNLLQNIVD), and 746–785 (DKLRQKIVKEKALPEIENYMFENHEQIRQAATECMCNLAV).

It localises to the cytoplasm. The protein resides in the myofibril. Its subcellular location is the sarcomere. The protein localises to the z line. It is found in the a band. It localises to the perinuclear region. The protein resides in the cytosol. Acts as a co-chaperone for HSP90 and is required for proper folding of the myosin motor domain. Plays a role in sarcomere formation during muscle cell assembly. Is necessary for normal early lens development. This chain is Protein unc-45 homolog B, found in Xenopus laevis (African clawed frog).